A 150-amino-acid chain; its full sequence is Cytosine deaminase (150 aa).

Residues 3-121 (FDDKKGLQVA…KLLIENGVEV (119 aa)) enclose the CMP/dCMP-type deaminase domain. Asn-44 serves as a coordination point for substrate. Position 55 (His-55) interacts with Zn(2+). The Proton donor role is filled by Glu-57. Residues Cys-84 and Cys-87 each contribute to the Zn(2+) site. Asp-147 is a binding site for substrate.

The protein belongs to the cytidine and deoxycytidylate deaminase family. Homodimer. It depends on Zn(2+) as a cofactor.

The protein resides in the cytoplasm. It localises to the nucleus. The enzyme catalyses cytosine + H2O + H(+) = uracil + NH4(+). It participates in pyrimidine metabolism; UMP biosynthesis via salvage pathway; uracil from cytosine: step 1/1. Catalyzes the hydrolytic deamination of cytosine to uracil or 5-methylcytosine to thymine. Is involved in the pyrimidine salvage pathway, which allows the cell to utilize cytosine for pyrimidine nucleotide synthesis. This is Cytosine deaminase from Candida albicans (strain SC5314 / ATCC MYA-2876) (Yeast).